Consider the following 350-residue polypeptide: Bifunctional methylenetetrahydrofolate dehydrogenase/cyclohydrolase, mitochondrial (350 aa).

A mitochondrion-targeting transit peptide spans 1–35; sequence MAAASFITSLVTRLLRSAQSGRLHQRPFHLSAVRN. An N6-acetyllysine; alternate modification is found at Lys50. Lys50 is covalently cross-linked (Glycyl lysine isopeptide (Lys-Gly) (interchain with G-Cter in SUMO2); alternate). Substrate-binding positions include 84 to 88 and 131 to 133; these read YVLNK and VQL. Residues 200 to 202 and Arg233 each bind NAD(+); that span reads GRS. Residue 309 to 313 participates in substrate binding; the sequence is PGGVG.

The protein belongs to the tetrahydrofolate dehydrogenase/cyclohydrolase family. As to quaternary structure, homodimer. Requires Mg(2+) as cofactor.

The protein resides in the mitochondrion. It catalyses the reaction (6R)-5,10-methylene-5,6,7,8-tetrahydrofolate + NAD(+) = (6R)-5,10-methenyltetrahydrofolate + NADH. The catalysed reaction is (6R)-5,10-methenyltetrahydrofolate + H2O = (6R)-10-formyltetrahydrofolate + H(+). Although its dehydrogenase activity is NAD-specific, it can also utilize NADP at a reduced efficiency. In Bos taurus (Bovine), this protein is Bifunctional methylenetetrahydrofolate dehydrogenase/cyclohydrolase, mitochondrial (MTHFD2).